Reading from the N-terminus, the 301-residue chain is Phomoidride biosynthesis cluster protein F (301 aa).

In terms of biological role, part of the gene cluster that mediates the biosynthesis of the antihypercholesterolemic agents phomoidrides which are dimeric anhydrides. The function of phiF within the pathway has still to be determined. The pathway begins with the highly reducing polyketide synthase phiA that catalyzes the formation of a C12-fatty acyl-ACP, starting from one acetate and 5 malonate units. The hydrolase phiM is involved in the release of the C12-fatty acyl chain from phiA. The alkylcitrate synthase (ACS) phiJ and the alkylcitrate dehydratase (ACDH) phiI then give rise to decarboxylated monomeric anhydrides by coupling the C12-fatty acyl chain with oxalacetic acid. The cyclase phiC is responsible for the dimerization of the monomeric anhydrides which leads to the production of prephomoidride that contains the characteristic bicyclo[4.3.1]deca-1,6-diene system of phomoidrides. Iterative oxidation catalyzed by the alpha-ketoglutarate-dependent dioxygenase phiK produced then phomoidride A. Finally, the methyltransferase phiE converts phomoidride A to phomoidride B via an acetalization reaction. The phosphatidylethanolamine-binding protein phiB and phiN are not essential for dimerization and their functions have still to be determined. This is Phomoidride biosynthesis cluster protein F from Fungal sp. (strain ATCC 74256).